Reading from the N-terminus, the 101-residue chain is NAD(P)H-quinone oxidoreductase subunit 4L, chloroplastic (101 aa).

A run of 3 helical transmembrane segments spans residues 2-22 (MLEHVLVLSAYLFSIGIYGLI), 32-52 (MCLELILNAVNINLVTFSDFF), and 61-81 (IFSIFVIAIAAAEAAIGLAIV).

This sequence belongs to the complex I subunit 4L family. As to quaternary structure, NDH is composed of at least 16 different subunits, 5 of which are encoded in the nucleus.

The protein localises to the plastid. It is found in the chloroplast thylakoid membrane. It carries out the reaction a plastoquinone + NADH + (n+1) H(+)(in) = a plastoquinol + NAD(+) + n H(+)(out). It catalyses the reaction a plastoquinone + NADPH + (n+1) H(+)(in) = a plastoquinol + NADP(+) + n H(+)(out). NDH shuttles electrons from NAD(P)H:plastoquinone, via FMN and iron-sulfur (Fe-S) centers, to quinones in the photosynthetic chain and possibly in a chloroplast respiratory chain. The immediate electron acceptor for the enzyme in this species is believed to be plastoquinone. Couples the redox reaction to proton translocation, and thus conserves the redox energy in a proton gradient. In Cicer arietinum (Chickpea), this protein is NAD(P)H-quinone oxidoreductase subunit 4L, chloroplastic.